A 708-amino-acid chain; its full sequence is ATP-dependent RNA helicase laf-1 (708 aa).

The segment covering 1–21 (MESNQSNNGGSGNAALNRGGR) has biased composition (low complexity). Residues 1–191 (MESNQSNNGG…RGTSKWENRG (191 aa)) are disordered. Gly residues predominate over residues 48–70 (GAGGGGYRRGGGNSGGGGGGGYD). Basic and acidic residues-rich tracts occupy residues 72 to 83 (GYNDNRDDRDNR) and 90 to 99 (GRDRNYEDRG). The segment covering 100–123 (YNGGGGGGGNRGYNNNRGGGGGGY) has biased composition (gly residues). The Q motif motif lies at 231-259 (SLFSDLSLHEWIEENIKTAGYDRPTPVQK). The region spanning 262 to 453 (IPALQGGRDL…QDFLKENYVF (192 aa)) is the Helicase ATP-binding domain. 275-282 (AQTGSGKT) contacts ATP. Positions 397 to 400 (DEAD) match the DEAD box motif. The Helicase C-terminal domain occupies 465 to 626 (NIMQKIVWVE…ELPDWLEGMS (162 aa)). The disordered stretch occupies residues 623–708 (EGMSGDMRSG…RAQPQQDWWS (86 aa)). 2 stretches are compositionally biased toward gly residues: residues 630–647 (RSGGGYRGRGGRGNGQRF) and 656–692 (GGSGNGGGGNGGGGGFGGGGQRSGGGGGFQSGGGGGR). Polar residues predominate over residues 699–708 (RAQPQQDWWS).

The protein belongs to the DEAD box helicase family. DDX3/DED1 subfamily. In terms of assembly, binds RNA as a monomer at low laf-1 concentrations and as a dimer at high laf-1 concentrations. In terms of tissue distribution, expressed in the germline and soma of young adult hermaphrodites.

Its subcellular location is the cytoplasm. The protein resides in the cytoplasmic granule. It localises to the nucleus. The protein localises to the stress granule. It is found in the inflammasome. Its subcellular location is the cell membrane. The protein resides in the cell projection. It localises to the lamellipodium. It carries out the reaction ATP + H2O = ADP + phosphate + H(+). Functionally, multifunctional ATP-dependent RNA helicase. Plays a role in RNA remodeling, but is not required for RNA unwinding. Binds to RNA in a concentration-dependent manner to stimulate annealing between two complementary strands of RNA. This process is also dependent upon ATP; ATP reduces binding to RNA and subsequently diminishes RNA annealing. Involved in many cellular processes, which do not necessarily require its ATPase/helicase catalytic activities. Involved in the regulation of transcription and translation initiation. Involved in innate immunity. Involved in both stress and inflammatory responses. Promotes liquid-liquid phase separation of P granules, which is a process important for intracellular organization and stress granule assembly. Required for embryonic development. Plays a role in sexual cell fate determination by negatively regulating the translation of the sex determining protein tra-2. May play a protective role in the response to heat and oxidative stress. May negatively regulate extrinsic apoptotic signaling pathway via death domain receptors. May be involved in mitotic chromosome segregation. The protein is ATP-dependent RNA helicase laf-1 of Caenorhabditis elegans.